We begin with the raw amino-acid sequence, 29 residues long: Glucagon (29 aa).

This sequence belongs to the glucagon family.

Its subcellular location is the secreted. Functionally, glucagon plays a key role in glucose metabolism and homeostasis. Regulates blood glucose by increasing gluconeogenesis and decreasing glycolysis. This Lampetra fluviatilis (European river lamprey) protein is Glucagon (gcg).